Consider the following 272-residue polypeptide: HMP-PP phosphatase (272 aa).

Asp8 acts as the Nucleophile in catalysis. Positions 8, 10, and 212 each coordinate Mg(2+).

This sequence belongs to the HAD-like hydrolase superfamily. Cof family. Mg(2+) serves as cofactor.

The catalysed reaction is 4-amino-2-methyl-5-(diphosphooxymethyl)pyrimidine + H2O = 4-amino-2-methyl-5-(phosphooxymethyl)pyrimidine + phosphate + H(+). Catalyzes the hydrolysis of 4-amino-2-methyl-5-hydroxymethylpyrimidine pyrophosphate (HMP-PP) to 4-amino-2-methyl-5-hydroxymethylpyrimidine phosphate (HMP-P). This is HMP-PP phosphatase from Enterobacter sp. (strain 638).